The primary structure comprises 107 residues: Ribosome-associated factor Y (107 aa).

The segment at 85–107 (LNKLQHKSESRRADERLKDSFEN) is disordered.

Associates mainly with 70S ribosomes.

In terms of biological role, during stationary phase, prevents 70S dimer formation, probably in order to regulate translation efficiency during transition between the exponential and the stationary phases. In addition, during environmental stress such as cold shock or excessive cell density at stationary phase, stabilizes the 70S ribosome against dissociation, inhibits translation initiation and increase translation accuracy. When normal growth conditions are restored, is quickly released from the ribosome. The protein is Ribosome-associated factor Y of Haemophilus influenzae (strain ATCC 51907 / DSM 11121 / KW20 / Rd).